The chain runs to 164 residues: Cell division protein SepF (164 aa).

The disordered stretch occupies residues 21–71; sequence YQQGQQPAQQQQSPVQAVPTPVPAPQQQAKRAPVTPLHKPSTTTRNAAPAE. Positions 22–49 are enriched in low complexity; it reads QQGQQPAQQQQSPVQAVPTPVPAPQQQA.

It belongs to the SepF family. Homodimer. Interacts with FtsZ.

It is found in the cytoplasm. Its function is as follows. Cell division protein that is part of the divisome complex and is recruited early to the Z-ring. Probably stimulates Z-ring formation, perhaps through the cross-linking of FtsZ protofilaments. Its function overlaps with FtsA. In Clavibacter sepedonicus (Clavibacter michiganensis subsp. sepedonicus), this protein is Cell division protein SepF.